The following is a 271-amino-acid chain: 5'-AMP-activated protein kinase subunit beta-2 (271 aa).

A disordered region spans residues 1–47; that stretch reads MGNTTSERVSGERHGAKAARAEGGGHGPGKEHKIMVGSTDDPSVFSL. S38 carries the post-translational modification Phosphoserine; by ULK1. T39 carries the post-translational modification Phosphothreonine; by ULK1. S68 is subject to Phosphoserine; by ULK1. Phosphoserine occurs at positions 94 and 107. Position 147 is a phosphothreonine (T147). 2 positions are modified to phosphoserine: S157 and S169. S173 carries the phosphoserine; by ULK1 modification. Phosphoserine is present on S183.

Belongs to the 5'-AMP-activated protein kinase beta subunit family. In terms of assembly, AMPK is a heterotrimer of an alpha catalytic subunit (PRKAA1 or PRKAA2), a beta (PRKAB1 or PRKAB2) and a gamma non-catalytic subunits (PRKAG1, PRKAG2 or PRKAG3). Phosphorylated when associated with the catalytic subunit (PRKAA1 or PRKAA2). Phosphorylated by ULK1 and ULK2; leading to negatively regulate AMPK activity and suggesting the existence of a regulatory feedback loop between ULK1, ULK2 and AMPK.

Its function is as follows. Non-catalytic subunit of AMP-activated protein kinase (AMPK), an energy sensor protein kinase that plays a key role in regulating cellular energy metabolism. In response to reduction of intracellular ATP levels, AMPK activates energy-producing pathways and inhibits energy-consuming processes: inhibits protein, carbohydrate and lipid biosynthesis, as well as cell growth and proliferation. AMPK acts via direct phosphorylation of metabolic enzymes, and by longer-term effects via phosphorylation of transcription regulators. Also acts as a regulator of cellular polarity by remodeling the actin cytoskeleton; probably by indirectly activating myosin. Beta non-catalytic subunit acts as a scaffold on which the AMPK complex assembles, via its C-terminus that bridges alpha (PRKAA1 or PRKAA2) and gamma subunits (PRKAG1, PRKAG2 or PRKAG3). In Rattus norvegicus (Rat), this protein is 5'-AMP-activated protein kinase subunit beta-2 (Prkab2).